Consider the following 265-residue polypeptide: Sulfur carrier protein FdhD (265 aa).

C107 (cysteine persulfide intermediate) is an active-site residue.

It belongs to the FdhD family.

The protein resides in the cytoplasm. In terms of biological role, required for formate dehydrogenase (FDH) activity. Acts as a sulfur carrier protein that transfers sulfur from IscS to the molybdenum cofactor prior to its insertion into FDH. This Staphylococcus aureus (strain bovine RF122 / ET3-1) protein is Sulfur carrier protein FdhD.